Reading from the N-terminus, the 390-residue chain is 8-demethyl-8-(2-methoxy-alpha-L-rhamnosyl)-tetracenomycin-C 3'-O-methyltransferase (390 aa).

S-adenosyl-L-methionine-binding positions include 202–208, S217, D234, 252–253, and D275; these read ELGIGGY and SQ. D275 serves as a coordination point for Mg(2+). The active-site Proton acceptor is H278. Mg(2+)-binding residues include E303 and D304.

It belongs to the methyltransferase OleY/MycE family. The cofactor is Mg(2+).

It carries out the reaction 8-demethyl-8-(2-O-methyl-alpha-L-rhamnosyl)-tetracenomycin C + S-adenosyl-L-methionine = 8-demethyl-8-(2,3-di-O-methyl-alpha-L-rhamnosyl)-tetracenomycin C + S-adenosyl-L-homocysteine + H(+). The protein operates within antibiotic biosynthesis. Functionally, O-methyltransferase involved in the biosynthesis of the permethylated L-rhamnose moiety of elloramycin, an antitumor polyketide. Mediates the methylation of the hydroxy groups at the 3'-position after the sugar moiety has been attached to the aglycon. The sequence is that of 8-demethyl-8-(2-methoxy-alpha-L-rhamnosyl)-tetracenomycin-C 3'-O-methyltransferase from Streptomyces olivaceus.